The primary structure comprises 211 residues: Thiamine-phosphate synthase (211 aa).

Residues 41–45 (QYRDK) and Asn-73 contribute to the 4-amino-2-methyl-5-(diphosphooxymethyl)pyrimidine site. Mg(2+) contacts are provided by Asp-74 and Asp-93. Thr-112 contacts 4-amino-2-methyl-5-(diphosphooxymethyl)pyrimidine. 139–141 (SPT) serves as a coordination point for 2-[(2R,5Z)-2-carboxy-4-methylthiazol-5(2H)-ylidene]ethyl phosphate. Residue Lys-142 participates in 4-amino-2-methyl-5-(diphosphooxymethyl)pyrimidine binding. Residues Gly-169 and 189–190 (VS) each bind 2-[(2R,5Z)-2-carboxy-4-methylthiazol-5(2H)-ylidene]ethyl phosphate.

The protein belongs to the thiamine-phosphate synthase family. Mg(2+) serves as cofactor.

It carries out the reaction 2-[(2R,5Z)-2-carboxy-4-methylthiazol-5(2H)-ylidene]ethyl phosphate + 4-amino-2-methyl-5-(diphosphooxymethyl)pyrimidine + 2 H(+) = thiamine phosphate + CO2 + diphosphate. The enzyme catalyses 2-(2-carboxy-4-methylthiazol-5-yl)ethyl phosphate + 4-amino-2-methyl-5-(diphosphooxymethyl)pyrimidine + 2 H(+) = thiamine phosphate + CO2 + diphosphate. The catalysed reaction is 4-methyl-5-(2-phosphooxyethyl)-thiazole + 4-amino-2-methyl-5-(diphosphooxymethyl)pyrimidine + H(+) = thiamine phosphate + diphosphate. It participates in cofactor biosynthesis; thiamine diphosphate biosynthesis; thiamine phosphate from 4-amino-2-methyl-5-diphosphomethylpyrimidine and 4-methyl-5-(2-phosphoethyl)-thiazole: step 1/1. Its function is as follows. Condenses 4-methyl-5-(beta-hydroxyethyl)thiazole monophosphate (THZ-P) and 2-methyl-4-amino-5-hydroxymethyl pyrimidine pyrophosphate (HMP-PP) to form thiamine monophosphate (TMP). This Thioalkalivibrio sulfidiphilus (strain HL-EbGR7) protein is Thiamine-phosphate synthase.